The chain runs to 388 residues: Basigin (388 aa).

A signal peptide spans 1–21 (MAAGADVPCAVLALLVLGSLA). Residues 27–323 (TAGFIKSPLS…SGSATVNLRV (297 aa)) lie on the Extracellular side of the membrane. One can recognise an Ig-like domain in the interval 43–131 (DSVELHCEAV…NHLSKSPKVK (89 aa)). 2 cysteine pairs are disulfide-bonded: Cys49/Cys113 and Cys162/Cys211. The 76-residue stretch at 143–218 (ERPVITGQYS…YECIYNTNPV (76 aa)) folds into the Ig-like C2-type domain. 5 N-linked (GlcNAc...) asparagine glycosylation sites follow: Asn163, Asn222, Asn280, Asn286, and Asn307. Residues 229–323 (PQVVAYKKSE…SGSATVNLRV (95 aa)) enclose the Ig-like V-type domain. An intrachain disulfide couples Cys250 to Cys306. The helical transmembrane segment at 324–344 (RSRLAALWPFLGIVAEVLVLV) threads the bilayer. The Cytoplasmic segment spans residues 345-388 (TIIFIYEKRRKPDEVLDDDDGGSAPLKSNATNHKDKNVRQRNAN). A disordered region spans residues 358-388 (EVLDDDDGGSAPLKSNATNHKDKNVRQRNAN).

In terms of assembly, interacts with NXNL1, SLC2A1 and SLC16A1. In terms of processing, N-glycosylated. As to expression, retinal cone photoreceptors (at protein level). In terms of tissue distribution, brain endothelial cells, kidney epithelial cells and erythroblasts (at protein level).

It localises to the cell membrane. Its subcellular location is the photoreceptor inner segment. The protein resides in the cell projection. It is found in the cilium. The protein localises to the photoreceptor outer segment. It localises to the endoplasmic reticulum membrane. Its subcellular location is the basolateral cell membrane. Functionally, essential for normal retinal maturation and development. Acts as a retinal cell surface receptor for NXNL1 and plays an important role in NXNL1-mediated survival of retinal cone photoreceptors. In association with glucose transporter SLC16A1/GLUT1 and NXNL1, promotes retinal cone survival by enhancing aerobic glycolysis and accelerating the entry of glucose into photoreceptors. In terms of biological role, signaling receptor for cyclophilins, essential for PPIA/CYPA and PPIB/CYPB-dependent signaling related to chemotaxis and adhesion of immune cells. Plays an important role in targeting the monocarboxylate transporters SLC16A1/GLUT1, SLC16A3, SLC16A8, SLC16A11 and SLC16A12 to the plasma membrane. Acts as a coreceptor for vascular endothelial growth factor receptor 2 (KDR/VEGFR2) in endothelial cells enhancing its VEGFA-mediated activation and downstream signaling. Promotes angiogenesis through EPAS1/HIF2A-mediated up-regulation of VEGFA and KDR/VEGFR2 in endothelial cells. The polypeptide is Basigin (BSG) (Gallus gallus (Chicken)).